We begin with the raw amino-acid sequence, 491 residues long: Carboxypeptidase SOL1 (491 aa).

The first 25 residues, Met-1–Ala-25, serve as a signal peptide directing secretion. Topologically, residues Arg-26–Asn-452 are extracellular. A glycan (N-linked (GlcNAc...) asparagine) is linked at Asn-39. The Peptidase M14 domain occupies Gly-64 to Leu-338. Residues His-125 and Glu-128 each coordinate Zn(2+). Substrate contacts are provided by residues His-125 to Glu-128 and Asn-186 to Arg-187. His-226 contributes to the Zn(2+) binding site. The N-linked (GlcNAc...) asparagine glycan is linked to Asn-268. Tyr-286 contributes to the substrate binding site. The active-site Proton donor/acceptor is Glu-308. A helical membrane pass occupies residues Asn-453 to Leu-470. Residues Gln-471–Val-491 lie on the Cytoplasmic side of the membrane.

Belongs to the peptidase M14 family. It depends on Zn(2+) as a cofactor. As to expression, expressed in roots, shoots, leaves, flowers and siliques.

The protein localises to the endosome membrane. In terms of biological role, possesses in vitro carboxypeptidase activity against the C-terminal arginine and lysine residues. Involved in the maturation of CLE19. Removes the C-terminal arginine residue of CLE19 proprotein. The cleavage of the C-terminal arginine residue is necessary for CLE19 activity in vivo. Is not involved in generating active CLV3. Is not involved in CLE19 or CLV3 perception. This is Carboxypeptidase SOL1 from Arabidopsis thaliana (Mouse-ear cress).